The primary structure comprises 633 residues: Threonine--tRNA ligase (633 aa).

The TGS domain occupies 1-61 (MINIYFNNNL…TENCTFEVIT (61 aa)). The interval 242 to 533 (DHRKIGKELE…LIEHHSGKFP (292 aa)) is catalytic. The Zn(2+) site is built by cysteine 333, histidine 384, and histidine 510.

Belongs to the class-II aminoacyl-tRNA synthetase family. In terms of assembly, homodimer. It depends on Zn(2+) as a cofactor.

It is found in the cytoplasm. It catalyses the reaction tRNA(Thr) + L-threonine + ATP = L-threonyl-tRNA(Thr) + AMP + diphosphate + H(+). Functionally, catalyzes the attachment of threonine to tRNA(Thr) in a two-step reaction: L-threonine is first activated by ATP to form Thr-AMP and then transferred to the acceptor end of tRNA(Thr). Also edits incorrectly charged L-seryl-tRNA(Thr). The sequence is that of Threonine--tRNA ligase from Ehrlichia canis (strain Jake).